Reading from the N-terminus, the 323-residue chain is Aldo-keto reductase family 1 member C4 (323 aa).

Residues 20–24 (GFGSY) and D50 contribute to the NADP(+) site. Y55 (proton donor) is an active-site residue. A substrate-binding site is contributed by H117. Residues 166 to 167 (SN), Q190, 216 to 221 (HSALGT), and 270 to 280 (KSYNEQRIREN) contribute to the NADP(+) site.

It belongs to the aldo/keto reductase family. In terms of assembly, monomer. In terms of tissue distribution, high expression in liver. Also expressed in kidney.

The protein resides in the cytoplasm. It localises to the cytosol. The enzyme catalyses chlordecone alcohol + NADP(+) = chlordecone + NADPH + H(+). It carries out the reaction a 3alpha-hydroxysteroid + NADP(+) = a 3-oxosteroid + NADPH + H(+). It catalyses the reaction a 3alpha-hydroxysteroid + NAD(+) = a 3-oxosteroid + NADH + H(+). The catalysed reaction is 5alpha-androstane-3alpha,17beta-diol + NADP(+) = 17beta-hydroxy-5alpha-androstan-3-one + NADPH + H(+). The enzyme catalyses 5alpha-androstane-3beta,17beta-diol + NADP(+) = 17beta-hydroxy-5alpha-androstan-3-one + NADPH + H(+). It carries out the reaction 5alpha-androstane-3alpha,17beta-diol + NAD(+) = 17beta-hydroxy-5alpha-androstan-3-one + NADH + H(+). It catalyses the reaction 17beta-estradiol + NADP(+) = estrone + NADPH + H(+). The catalysed reaction is 17beta-estradiol + NAD(+) = estrone + NADH + H(+). The enzyme catalyses (20S)-hydroxypregn-4-en-3-one + NADP(+) = progesterone + NADPH + H(+). It carries out the reaction (20S)-hydroxypregn-4-en-3-one + NAD(+) = progesterone + NADH + H(+). It catalyses the reaction androsterone + NADP(+) = 5alpha-androstan-3,17-dione + NADPH + H(+). The catalysed reaction is testosterone + NADP(+) = androst-4-ene-3,17-dione + NADPH + H(+). The enzyme catalyses testosterone + NAD(+) = androst-4-ene-3,17-dione + NADH + H(+). It carries out the reaction 3alpha-hydroxy-5alpha-androstane 17-O-(beta-D-glucuronate) + NADP(+) = 5alpha-dihydrotestosterone 17-O-(beta-D-glucuronate) + NADPH + H(+). It catalyses the reaction (3beta,5alpha,17beta)-3-hydroxy-androstan-17-yl sulfate + NADP(+) = 5alpha-dihydrotestosterone sulfate + NADPH + H(+). The catalysed reaction is 5alpha-androstane-3alpha,17beta-diol + NAD(+) = androsterone + NADH + H(+). The protein operates within steroid metabolism. With respect to regulation, potently inhibited by benzbromarone, 3',3'',5',5''-tetrabromophenolphthalein (TBPP) and o-cresolphthalein. In terms of biological role, cytosolic aldo-keto reductase that catalyzes the NADH and NADPH-dependent reduction of ketosteroids to hydroxysteroids. Liver specific enzyme that acts as an NAD(P)(H)-dependent 3-, 17- and 20-ketosteroid reductase on the steroid nucleus and side chain. Displays the ability to catalyze both oxidation and reduction in vitro, but most probably acts as a reductase in vivo since the oxidase activity measured in vitro is inhibited by physiological concentration of NADPH. Acts preferentially as a 3-alpha-hydroxysteroid dehydrogenase (HSD) with a subsidiary 3-beta-HSD activity. Catalyzes efficiently the transformation of the potent androgen 5-alpha-dihydrotestosterone (5alpha-DHT or 17beta-hydroxy-5alpha-androstan-3-one) into the less active form, 5-alpha-androstan-3-alpha,17-beta-diol (3-alpha-diol). Catalyzes the reduction of estrone into 17beta-estradiol but with low efficiency. Metabolizes a broad spectrum of natural and synthetic therapeutic steroid and plays an important role in metabolism of androgens, estrogens, progestereone and conjugated steroids. Catalyzes the biotransformation of the pesticide chlordecone (kepone) to its corresponding alcohol leading to increased biliary excretion of the pesticide and concomitant reduction of its neurotoxicity since bile is the major excretory route. The sequence is that of Aldo-keto reductase family 1 member C4 (AKR1C4) from Macaca fuscata fuscata (Japanese macaque).